The primary structure comprises 170 residues: Acireductone dioxygenase (170 aa).

The Fe(2+) site is built by histidine 99, histidine 101, glutamate 105, and histidine 144. Ni(2+)-binding residues include histidine 99, histidine 101, glutamate 105, and histidine 144.

It belongs to the acireductone dioxygenase (ARD) family. As to quaternary structure, monomer. Requires Fe(2+) as cofactor. Ni(2+) is required as a cofactor.

It carries out the reaction 1,2-dihydroxy-5-(methylsulfanyl)pent-1-en-3-one + O2 = 3-(methylsulfanyl)propanoate + CO + formate + 2 H(+). The enzyme catalyses 1,2-dihydroxy-5-(methylsulfanyl)pent-1-en-3-one + O2 = 4-methylsulfanyl-2-oxobutanoate + formate + 2 H(+). Its pathway is amino-acid biosynthesis; L-methionine biosynthesis via salvage pathway; L-methionine from S-methyl-5-thio-alpha-D-ribose 1-phosphate: step 5/6. Functionally, catalyzes 2 different reactions between oxygen and the acireductone 1,2-dihydroxy-3-keto-5-methylthiopentene (DHK-MTPene) depending upon the metal bound in the active site. Fe-containing acireductone dioxygenase (Fe-ARD) produces formate and 2-keto-4-methylthiobutyrate (KMTB), the alpha-ketoacid precursor of methionine in the methionine recycle pathway. Ni-containing acireductone dioxygenase (Ni-ARD) produces methylthiopropionate, carbon monoxide and formate, and does not lie on the methionine recycle pathway. The protein is Acireductone dioxygenase of Bacillus anthracis.